An 870-amino-acid chain; its full sequence is Increased rDNA silencing protein 4 (870 aa).

Basic residues predominate over residues 1-11; sequence MHMRLNKRRRN. Disordered regions lie at residues 1-25, 38-57, 62-92, 147-260, 275-315, 516-579, and 717-738; these read MHMR…QDAK, RHAD…DSAG, QADT…MHKV, IRTT…PSNM, GRKN…PSPI, YLGN…SSSY, and DDSA…LSDG. Residues 75–86 are compositionally biased toward polar residues; the sequence is PSGTSSSHNSGN. Residues 155–166 are compositionally biased toward basic and acidic residues; sequence QDKKRRDIENAH. Low complexity predominate over residues 167-181; that stretch reads HAASAAAVTSSNLAV. Over residues 184-208 the composition is skewed to polar residues; that stretch reads PPSQYIPSVPTLNVTSPQMRNSSQN. Residues 209-227 show a composition bias toward basic and acidic residues; the sequence is IDRRSKSNEEAHNGHEKMM. Positions 228 to 237 are enriched in low complexity; the sequence is NSRSNSINSS. Over residues 238–259 the composition is skewed to polar residues; the sequence is TIKGSVSEPNTVTPLRQNSPSN. Residues 299-310 are compositionally biased toward basic residues; that stretch reads RPMRTPSGRRVR. Over residues 532–548 the composition is skewed to acidic residues; the sequence is IDDDDDDDDYDSAYEDL. Residues 549 to 566 show a composition bias toward basic and acidic residues; sequence DYSRDDSEAMYKGDRESS. Composition is skewed to low complexity over residues 567–579 and 720–730; these read NPRS…SSSY and ASNLNSNASTN. The EH domain occupies 739-828; it reads DNEEDDVTRF…PKIWDSVDRW (90 aa).

This sequence belongs to the IRS4 family.

Positive regulator of phosphatidylinositol 4,5-bisphosphate turnover and negatively regulates signaling through the cell integrity pathway. Involved in rDNA silencing. The polypeptide is Increased rDNA silencing protein 4 (IRS4) (Candida glabrata (strain ATCC 2001 / BCRC 20586 / JCM 3761 / NBRC 0622 / NRRL Y-65 / CBS 138) (Yeast)).